A 1174-amino-acid chain; its full sequence is Male determiner protein Mdmd(II) (1174 aa).

Basic and acidic residues predominate over residues 1–15 (MNATDAESRKPENKP). 3 disordered regions span residues 1–51 (MNAT…SGQR), 80–109 (KDGS…HPVE), and 136–259 (KQLS…LRRS). The segment covering 16-35 (SSESSSSGSTSGSSDGEVSS) has biased composition (low complexity). The segment covering 36–47 (KTYFKNNKSKVL) has biased composition (polar residues). A compositionally biased stretch (basic and acidic residues) spans 80–92 (KDGSNEMLPKEDS). The segment covering 93–102 (INTNHNYTTD) has biased composition (polar residues). The segment covering 138–153 (LSAYRSRSRSTRLSYS) has biased composition (low complexity). Positions 183-200 (HGRDSSTTKRSVSRDKDN) are enriched in basic and acidic residues. Positions 201-223 (RLRRRIGSSRSHTRSHSRFRRSE) are enriched in basic residues. The segment covering 235 to 259 (RSQERRHERRRSMSSDYERIALRRS) has biased composition (basic and acidic residues). Residues 348-531 (KKYIHGYINK…KVLFQVRRDG (184 aa)) form the MIF4G domain. Over residues 597–608 (DSDGSFGSGSNS) the composition is skewed to low complexity. Residues 597–616 (DSDGSFGSGSNSETALSDCD) form a disordered region. Positions 641–757 (ALRRTIYLTL…SWDVLDCIKL (117 aa)) constitute an MI domain. Positions 840-857 (SAPSSSSSSSLSSELSAP) are enriched in low complexity. Disordered stretches follow at residues 840–1045 (SAPS…SRTK) and 1095–1133 (RKDN…NHSR). Positions 869-909 (KKKHKGKNKKMTKKKNPSKKKEKTKKIVGKNKIAAKNKTIK) are enriched in basic residues. Positions 910-924 (RRTDKDNSSSKDNFL) are enriched in basic and acidic residues. Positions 926–957 (SESSSNESISLDSLSSELFAPSSYSSSESSND) are enriched in low complexity. The span at 963 to 1001 (KHKGKNKKMTKKKNPSNKREKTKKKLSKNKKAPNKNTKK) shows a compositional bias: basic residues. Low complexity predominate over residues 1010–1020 (SSESSISESKS). A compositionally biased stretch (basic residues) spans 1034-1045 (RKKRVTSKSRTK). Residues 1095-1118 (RKDNYGNRQNHEISQRHDSEIKRR) show a composition bias toward basic and acidic residues. A compositionally biased stretch (basic residues) spans 1119-1130 (REERKKRHHEKN).

This sequence belongs to the CWC22 family. In terms of assembly, component of the spliceosome C complex.

Its subcellular location is the nucleus speckle. Functionally, male determiner protein (M-factor) that controls male somatic sexual differentiation. Acts as a dominant factor that regulates the mRNA splicing of transformer (tra) and doublesex (dsx) transcripts and promotes expression of male splice forms of tra and dsx. Probably acts as a component of the spliceosome C complex required for mRNA splicing factor and exon-junction complex (EJC) assembly. Hinders eIF4AIII from non-specifically binding RNA and escorts it to the splicing machinery to promote EJC assembly on mature mRNAs. The chain is Male determiner protein Mdmd(II) from Musca domestica (House fly).